Consider the following 501-residue polypeptide: Lysine--tRNA ligase (501 aa).

Mg(2+) contacts are provided by E411 and E418.

This sequence belongs to the class-II aminoacyl-tRNA synthetase family. In terms of assembly, homodimer. It depends on Mg(2+) as a cofactor.

It localises to the cytoplasm. The catalysed reaction is tRNA(Lys) + L-lysine + ATP = L-lysyl-tRNA(Lys) + AMP + diphosphate. The sequence is that of Lysine--tRNA ligase from Shewanella woodyi (strain ATCC 51908 / MS32).